A 265-amino-acid chain; its full sequence is Cytochrome c oxidase subunit 3 (265 aa).

6 helical membrane-spanning segments follow: residues 16 to 36 (PWPI…VMYM), 41 to 61 (GGAT…FVWW), 84 to 104 (YGSI…FWAS), 162 to 182 (AVYA…FQGM), 200 to 220 (FFLA…FLIV), and 245 to 265 (WHFV…WGGI).

The protein belongs to the cytochrome c oxidase subunit 3 family. As to quaternary structure, component of the cytochrome c oxidase (complex IV, CIV), a multisubunit enzyme composed of a catalytic core of 3 subunits and several supernumerary subunits. The complex exists as a monomer or a dimer and forms supercomplexes (SCs) in the inner mitochondrial membrane with ubiquinol-cytochrome c oxidoreductase (cytochrome b-c1 complex, complex III, CIII).

Its subcellular location is the mitochondrion inner membrane. It catalyses the reaction 4 Fe(II)-[cytochrome c] + O2 + 8 H(+)(in) = 4 Fe(III)-[cytochrome c] + 2 H2O + 4 H(+)(out). In terms of biological role, component of the cytochrome c oxidase, the last enzyme in the mitochondrial electron transport chain which drives oxidative phosphorylation. The respiratory chain contains 3 multisubunit complexes succinate dehydrogenase (complex II, CII), ubiquinol-cytochrome c oxidoreductase (cytochrome b-c1 complex, complex III, CIII) and cytochrome c oxidase (complex IV, CIV), that cooperate to transfer electrons derived from NADH and succinate to molecular oxygen, creating an electrochemical gradient over the inner membrane that drives transmembrane transport and the ATP synthase. Cytochrome c oxidase is the component of the respiratory chain that catalyzes the reduction of oxygen to water. Electrons originating from reduced cytochrome c in the intermembrane space (IMS) are transferred via the dinuclear copper A center (CU(A)) of subunit 2 and heme A of subunit 1 to the active site in subunit 1, a binuclear center (BNC) formed by heme A3 and copper B (CU(B)). The BNC reduces molecular oxygen to 2 water molecules using 4 electrons from cytochrome c in the IMS and 4 protons from the mitochondrial matrix. The polypeptide is Cytochrome c oxidase subunit 3 (COX3) (Aegilops columnaris (Goatgrass)).